A 377-amino-acid chain; its full sequence is MKFELDTTQGRARRGRLVFERGTVETPAFMPVGTYGTVKGMTPEEVRETGADILLGNTFHLWLRPGEEIMRKHGDLHDFMNWQRPILTDSGGFQVFSLGDIRKITEEGVHFRSPINGEKIFLDPEKSMQIQDSLGSDVVMIFDECTPYPATEDEARKSMQMSLRWAQRSRDEFDRLENPNSLFGIIQGGVYEGLRDESLKGLVDIGFDGYAVGGLAVGEPKEDMHRILEHTCPQIPADKPRYLMGVGKPEDLVEGVRRGVDMFDCVMPTRNARNGHLFTSEGVVKIRNARHRDDTSTLDDKCDCYTCKNYSRAYLYHLDRCNEILGARLNTIHNLRYYQRLMEGLRGAIETGTLDDFVTEFYTSQGREVPEVPELTD.

Asp89 (proton acceptor) is an active-site residue. Residues 89 to 93, Asp143, Gln187, and Gly214 contribute to the substrate site; that span reads DSGGF. Residues 245–251 form an RNA binding region; sequence GVGKPED. Residue Asp264 is the Nucleophile of the active site. The RNA binding; important for wobble base 34 recognition stretch occupies residues 269–273; that stretch reads TRNAR. Positions 302, 304, 307, and 333 each coordinate Zn(2+).

Belongs to the queuine tRNA-ribosyltransferase family. In terms of assembly, homodimer. Within each dimer, one monomer is responsible for RNA recognition and catalysis, while the other monomer binds to the replacement base PreQ1. The cofactor is Zn(2+).

The catalysed reaction is 7-aminomethyl-7-carbaguanine + guanosine(34) in tRNA = 7-aminomethyl-7-carbaguanosine(34) in tRNA + guanine. It functions in the pathway tRNA modification; tRNA-queuosine biosynthesis. Functionally, catalyzes the base-exchange of a guanine (G) residue with the queuine precursor 7-aminomethyl-7-deazaguanine (PreQ1) at position 34 (anticodon wobble position) in tRNAs with GU(N) anticodons (tRNA-Asp, -Asn, -His and -Tyr). Catalysis occurs through a double-displacement mechanism. The nucleophile active site attacks the C1' of nucleotide 34 to detach the guanine base from the RNA, forming a covalent enzyme-RNA intermediate. The proton acceptor active site deprotonates the incoming PreQ1, allowing a nucleophilic attack on the C1' of the ribose to form the product. After dissociation, two additional enzymatic reactions on the tRNA convert PreQ1 to queuine (Q), resulting in the hypermodified nucleoside queuosine (7-(((4,5-cis-dihydroxy-2-cyclopenten-1-yl)amino)methyl)-7-deazaguanosine). This is Queuine tRNA-ribosyltransferase from Shewanella piezotolerans (strain WP3 / JCM 13877).